We begin with the raw amino-acid sequence, 377 residues long: Chaperone protein DnaJ (377 aa).

In terms of domain architecture, J spans 5–69 (EFYDRLGVSK…QKRSAYDQYG (65 aa)). The CR-type zinc-finger motif lies at 133–215 (GVEKDVSYHR…CHGTGHEKET (83 aa)). 8 residues coordinate Zn(2+): Cys-146, Cys-149, Cys-163, Cys-166, Cys-189, Cys-192, Cys-203, and Cys-206. CXXCXGXG motif repeat units follow at residues 146 to 153 (CHTCAGSG), 163 to 170 (CGRCHGSG), 189 to 196 (CDVCHGSG), and 203 to 210 (CQTCHGTG).

It belongs to the DnaJ family. As to quaternary structure, homodimer. Zn(2+) is required as a cofactor.

It localises to the cytoplasm. Functionally, participates actively in the response to hyperosmotic and heat shock by preventing the aggregation of stress-denatured proteins and by disaggregating proteins, also in an autonomous, DnaK-independent fashion. Unfolded proteins bind initially to DnaJ; upon interaction with the DnaJ-bound protein, DnaK hydrolyzes its bound ATP, resulting in the formation of a stable complex. GrpE releases ADP from DnaK; ATP binding to DnaK triggers the release of the substrate protein, thus completing the reaction cycle. Several rounds of ATP-dependent interactions between DnaJ, DnaK and GrpE are required for fully efficient folding. Also involved, together with DnaK and GrpE, in the DNA replication of plasmids through activation of initiation proteins. The polypeptide is Chaperone protein DnaJ (Streptococcus uberis (strain ATCC BAA-854 / 0140J)).